A 541-amino-acid chain; its full sequence is MAKILKFDEDARRALERGVNKLADTVKVTIGPKGRNVVIDKKFGAPTITNDGVTIAREVEVEDPYENLGAQLVKEVATKTNDIAGDGTTTATVLAQALVREGLKNVAAGASPALLKKGIDAAVAAVSEDLLATARPIDEKSDIAAVAALSAQDQQVGELIAEAMDKVGKDGVITVEESNTFGLELDFTEGMAFDKGYLSPYFVTDQERMEAVLDDPYILINQGKISSIADLLPLLEKVIQANASKPLLIIAEDLEGEALSTLVVNKIRGTFNAVAVKAPGFGDRRKAMLQDMAVLTGATVISEEVGLKLDQVGLEVLGTARRITVTKDDTTIVDGAGKRDEVQGRIAQIKAEIENTDSDWDREKLQERLAKLAGGVCVIKVGAATEVELKERKHRLEDAISATRAAVEEGIVSGGGSALVHAVKVLEGNLGKTGDEATGVAVVRRAAVEPLRWIAENAGLEGYVITSKVADLDKGQGFNAATGEYGDLVKAGVIDPVKVTRSALENAASIASLLLTTETLVVEKKEEEEPAAGGHSHGHSH.

ATP-binding positions include 29 to 32, 86 to 90, Gly415, 479 to 481, and Asp495; these read TIGP, DGTTT, and NAA.

It belongs to the chaperonin (HSP60) family. In terms of assembly, forms a cylinder of 14 subunits composed of two heptameric rings stacked back-to-back. Interacts with the co-chaperonin GroES.

It is found in the cytoplasm. It carries out the reaction ATP + H2O + a folded polypeptide = ADP + phosphate + an unfolded polypeptide.. In terms of biological role, together with its co-chaperonin GroES, plays an essential role in assisting protein folding. The GroEL-GroES system forms a nano-cage that allows encapsulation of the non-native substrate proteins and provides a physical environment optimized to promote and accelerate protein folding. This Streptomyces coelicolor (strain ATCC BAA-471 / A3(2) / M145) protein is Chaperonin GroEL 1.